A 505-amino-acid chain; its full sequence is Histidine ammonia-lyase (505 aa).

The segment at residues 141-143 is a cross-link (5-imidazolinone (Ala-Gly)); that stretch reads ASG. At S142 the chain carries 2,3-didehydroalanine (Ser).

The protein belongs to the PAL/histidase family. Contains an active site 4-methylidene-imidazol-5-one (MIO), which is formed autocatalytically by cyclization and dehydration of residues Ala-Ser-Gly.

The protein localises to the cytoplasm. It carries out the reaction L-histidine = trans-urocanate + NH4(+). It participates in amino-acid degradation; L-histidine degradation into L-glutamate; N-formimidoyl-L-glutamate from L-histidine: step 1/3. This Bacillus anthracis protein is Histidine ammonia-lyase.